Reading from the N-terminus, the 92-residue chain is Large ribosomal subunit protein bL25 (92 aa).

Belongs to the bacterial ribosomal protein bL25 family. As to quaternary structure, part of the 50S ribosomal subunit; part of the 5S rRNA/L5/L18/L25 subcomplex. Contacts the 5S rRNA. Binds to the 5S rRNA independently of L5 and L18.

This is one of the proteins that binds to the 5S RNA in the ribosome where it forms part of the central protuberance. This Aliivibrio salmonicida (strain LFI1238) (Vibrio salmonicida (strain LFI1238)) protein is Large ribosomal subunit protein bL25.